We begin with the raw amino-acid sequence, 73 residues long: Translation initiation factor IF-1 (73 aa).

Residues 1 to 73 form the S1-like domain; that stretch reads MAKKDGVIEL…ARGRIVYRYK (73 aa).

It belongs to the IF-1 family. Component of the 30S ribosomal translation pre-initiation complex which assembles on the 30S ribosome in the order IF-2 and IF-3, IF-1 and N-formylmethionyl-tRNA(fMet); mRNA recruitment can occur at any time during PIC assembly.

The protein resides in the cytoplasm. In terms of biological role, one of the essential components for the initiation of protein synthesis. Stabilizes the binding of IF-2 and IF-3 on the 30S subunit to which N-formylmethionyl-tRNA(fMet) subsequently binds. Helps modulate mRNA selection, yielding the 30S pre-initiation complex (PIC). Upon addition of the 50S ribosomal subunit IF-1, IF-2 and IF-3 are released leaving the mature 70S translation initiation complex. This Tropheryma whipplei (strain TW08/27) (Whipple's bacillus) protein is Translation initiation factor IF-1.